Here is a 419-residue protein sequence, read N- to C-terminus: Capsule polysaccharide modification protein LipB (419 aa).

It localises to the cell inner membrane. Its function is as follows. Involved in the phospholipid modification of the capsular polysaccharide, a strong requirement for its translocation to the cell surface. This chain is Capsule polysaccharide modification protein LipB (lipB), found in Neisseria meningitidis serogroup B (strain ATCC BAA-335 / MC58).